A 151-amino-acid polypeptide reads, in one-letter code: 3-hydroxyacyl-[acyl-carrier-protein] dehydratase FabZ (151 aa).

His54 is a catalytic residue.

It belongs to the thioester dehydratase family. FabZ subfamily.

Its subcellular location is the cytoplasm. It catalyses the reaction a (3R)-hydroxyacyl-[ACP] = a (2E)-enoyl-[ACP] + H2O. In terms of biological role, involved in unsaturated fatty acids biosynthesis. Catalyzes the dehydration of short chain beta-hydroxyacyl-ACPs and long chain saturated and unsaturated beta-hydroxyacyl-ACPs. This is 3-hydroxyacyl-[acyl-carrier-protein] dehydratase FabZ from Blochmanniella floridana.